The following is a 279-amino-acid chain: MPELPEVEVTRRGLEPLIGATVTQAVIRQPAMRWPIPSHLPQVLHGARLLELRRRGKYIIARFESGCLILHLGMSGRLCLLESDTFPEKHDHFDLHFADGRVMRMRDPRRFGAVLWAGDQPDEHSLLKVLGQEPLDEAFNGEFLQQAIRTRSSPIKTVIMDSHLVVGVGNIYASESLFRAGIHPETPARALTLAQCRRLVEEVKLTLQDALQAGGSSLRDFFGADGNPGYFQQTYFVYGRTGQPCRVCQTPIAVLRLGQRSTFYCPACQQGQPPSNAMP.

The active-site Schiff-base intermediate with DNA is Pro-2. Glu-3 acts as the Proton donor in catalysis. The Proton donor; for beta-elimination activity role is filled by Lys-57. DNA contacts are provided by His-90, Arg-109, and Arg-151. Residues Phe-236–Gln-270 form an FPG-type zinc finger. The Proton donor; for delta-elimination activity role is filled by Arg-260.

Belongs to the FPG family. As to quaternary structure, monomer. Zn(2+) is required as a cofactor.

It catalyses the reaction Hydrolysis of DNA containing ring-opened 7-methylguanine residues, releasing 2,6-diamino-4-hydroxy-5-(N-methyl)formamidopyrimidine.. The catalysed reaction is 2'-deoxyribonucleotide-(2'-deoxyribose 5'-phosphate)-2'-deoxyribonucleotide-DNA = a 3'-end 2'-deoxyribonucleotide-(2,3-dehydro-2,3-deoxyribose 5'-phosphate)-DNA + a 5'-end 5'-phospho-2'-deoxyribonucleoside-DNA + H(+). Functionally, involved in base excision repair of DNA damaged by oxidation or by mutagenic agents. Acts as a DNA glycosylase that recognizes and removes damaged bases. Has a preference for oxidized purines, such as 7,8-dihydro-8-oxoguanine (8-oxoG). Has AP (apurinic/apyrimidinic) lyase activity and introduces nicks in the DNA strand. Cleaves the DNA backbone by beta-delta elimination to generate a single-strand break at the site of the removed base with both 3'- and 5'-phosphates. In Methylobacillus flagellatus (strain ATCC 51484 / DSM 6875 / VKM B-1610 / KT), this protein is Formamidopyrimidine-DNA glycosylase.